A 224-amino-acid chain; its full sequence is MMTNLFSVFDPSAIFNLSLNWLSTFLGLLMIPSIYWLMPSRYNIVWNSILLTLHKEFKTLLGPSGHNGSTFIFISLFSLILFNNFMGLFPYIFTSTSHLTLTLSLALPLWLCFMLYGWINHTQHMFAHLVPQGTPAILMPFMVCIETISNIIRPGTLAVRLTANMIAGHLLLTLLGNTGPSMSYLLVTFLLTAQIALLVLESAVAMIQSYVFAVLSTLYSSEVN.

6 helical membrane-spanning segments follow: residues 17–37 (LSLN…IYWL), 72–92 (IFIS…FPYI), 99–119 (LTLT…YGWI), 125–145 (MFAH…MVCI), 170–190 (LLLT…VTFL), and 195–215 (IALL…FAVL).

This sequence belongs to the ATPase A chain family. F-type ATPases have 2 components, CF(1) - the catalytic core - and CF(0) - the membrane proton channel. CF(1) has five subunits: alpha(3), beta(3), gamma(1), delta(1), epsilon(1). CF(0) has three main subunits: a, b and c.

It is found in the mitochondrion inner membrane. Mitochondrial membrane ATP synthase (F(1)F(0) ATP synthase or Complex V) produces ATP from ADP in the presence of a proton gradient across the membrane which is generated by electron transport complexes of the respiratory chain. F-type ATPases consist of two structural domains, F(1) - containing the extramembraneous catalytic core and F(0) - containing the membrane proton channel, linked together by a central stalk and a peripheral stalk. During catalysis, ATP synthesis in the catalytic domain of F(1) is coupled via a rotary mechanism of the central stalk subunits to proton translocation. Key component of the proton channel; it may play a direct role in the translocation of protons across the membrane. The protein is ATP synthase subunit a (mt:ATPase6) of Drosophila simulans (Fruit fly).